The following is a 146-amino-acid chain: Phospholipase A2 OS2 (146 aa).

Positions 1-27 (MHPAHLLVLLAVCVSLLGASDIPPLPL) are cleaved as a signal peptide. Disulfide bonds link cysteine 38/cysteine 99, cysteine 54/cysteine 145, cysteine 56/cysteine 72, cysteine 71/cysteine 126, cysteine 78/cysteine 119, cysteine 88/cysteine 112, and cysteine 106/cysteine 117. Residues tyrosine 55, glycine 57, and glycine 59 each contribute to the Ca(2+) site. Residue histidine 75 is part of the active site. Position 76 (aspartate 76) interacts with Ca(2+). Aspartate 120 is an active-site residue.

Belongs to the phospholipase A2 family. Group I subfamily. D49 sub-subfamily. In terms of assembly, monomer. Ca(2+) serves as cofactor. In terms of tissue distribution, expressed by the venom gland.

The protein localises to the secreted. The enzyme catalyses a 1,2-diacyl-sn-glycero-3-phosphocholine + H2O = a 1-acyl-sn-glycero-3-phosphocholine + a fatty acid + H(+). Its function is as follows. Snake venom phospholipase A2 (PLA2) that shows high presynaptic neurotoxicity in vertebrata that is independent of catalytic activity, as well as local myotoxicity when intramuscularly injected into mice. Blocks acetylcholine release in Aplysia neurons, and potentiates pro-inflammatory cellular signaling. Potentiates glutamate excitoxicity when coinjected into brain of rats. May act by binding in a calcium-dependent fashion and with high affinity to a neuronal-type (N-type) PLA2 receptor, and with very high affinity to a muscle-type (M-type) PLA2 receptor. In vitro, shows a high-specific activity on E.coli membranes and is more efficient on the anionic phospholipid POPG than on the anionic phospholipid POPS or the zwitterionic phospholipid POPC. Exerts catalytically-independent anti-HIV (IC(50) is 35 nM) activity and catalytically-dependent antimalarial activity (IC(50) is 3.1 nM when tested on P.falciparum grown in serum that contains lipoproteins). PLA2 catalyzes the calcium-dependent hydrolysis of the 2-acyl groups in 3-sn-phosphoglycerides. This chain is Phospholipase A2 OS2, found in Oxyuranus scutellatus scutellatus (Australian taipan).